The primary structure comprises 1181 residues: Clustered mitochondria protein homolog (1181 aa).

The segment at 165–195 (AKAEALAKNEEVSEDEESEPEDDTPMKQSTQ) is disordered. Acidic residues predominate over residues 176-187 (VSEDEESEPEDD). Residues 379–622 (DMARNQELLS…RLAPVDIAFL (244 aa)) form the Clu domain. The segment at 1130 to 1181 (GRLARQAPKPTATHQKEAPKKASKKTKGKGKGKDDKGEKLVAELKKKKAGKR) is disordered. A compositionally biased stretch (basic residues) spans 1150–1159 (KASKKTKGKG). Basic and acidic residues predominate over residues 1160–1173 (KGKDDKGEKLVAEL).

It belongs to the CLU family. In terms of assembly, may associate with the eukaryotic translation initiation factor 3 (eIF-3) complex.

The protein localises to the cytoplasm. Its function is as follows. mRNA-binding protein involved in proper cytoplasmic distribution of mitochondria. The polypeptide is Clustered mitochondria protein homolog (Yarrowia lipolytica (strain CLIB 122 / E 150) (Yeast)).